Reading from the N-terminus, the 193-residue chain is Ion-translocating oxidoreductase complex subunit B (193 aa).

The hydrophobic stretch occupies residues 1–26 (MSTMLIAVILLTLLALFFGVLLGFAA). Residues 32–90 (EGNPIVDELEAILPQTQCGQCGYPGCRPYAEAIANGDKVNKCPPGGTATMEKLANLMGV) enclose the 4Fe-4S domain. Cys49, Cys52, Cys57, Cys73, Cys114, Cys117, Cys120, Cys124, Cys144, Cys147, Cys150, and Cys154 together coordinate [4Fe-4S] cluster. 4Fe-4S ferredoxin-type domains follow at residues 105 to 134 (KVAYIREDECIGCTKCIQACPVDAIIGAGK) and 136 to 164 (MHTVLTADCTGCDLCVEPCPVDCIDMIPV).

The protein belongs to the 4Fe4S bacterial-type ferredoxin family. RnfB subfamily. In terms of assembly, the complex is composed of six subunits: RnfA, RnfB, RnfC, RnfD, RnfE and RnfG. [4Fe-4S] cluster serves as cofactor.

The protein localises to the cell inner membrane. Part of a membrane-bound complex that couples electron transfer with translocation of ions across the membrane. The sequence is that of Ion-translocating oxidoreductase complex subunit B from Shewanella sp. (strain ANA-3).